Here is a 413-residue protein sequence, read N- to C-terminus: Gamma-glutamyl phosphate reductase (413 aa).

This sequence belongs to the gamma-glutamyl phosphate reductase family.

The protein localises to the cytoplasm. The catalysed reaction is L-glutamate 5-semialdehyde + phosphate + NADP(+) = L-glutamyl 5-phosphate + NADPH + H(+). It participates in amino-acid biosynthesis; L-proline biosynthesis; L-glutamate 5-semialdehyde from L-glutamate: step 2/2. Functionally, catalyzes the NADPH-dependent reduction of L-glutamate 5-phosphate into L-glutamate 5-semialdehyde and phosphate. The product spontaneously undergoes cyclization to form 1-pyrroline-5-carboxylate. This is Gamma-glutamyl phosphate reductase from Caulobacter vibrioides (strain ATCC 19089 / CIP 103742 / CB 15) (Caulobacter crescentus).